Consider the following 236-residue polypeptide: Uridylate kinase (236 aa).

10–13 (KLSG) serves as a coordination point for ATP. Gly52 serves as a coordination point for UMP. ATP-binding residues include Gly53 and Arg57. UMP contacts are provided by residues Asp72 and 133–140 (TGNPFFTT). The ATP site is built by Thr160, Tyr166, and Asp169.

It belongs to the UMP kinase family. As to quaternary structure, homohexamer.

It is found in the cytoplasm. It catalyses the reaction UMP + ATP = UDP + ADP. It functions in the pathway pyrimidine metabolism; CTP biosynthesis via de novo pathway; UDP from UMP (UMPK route): step 1/1. Its activity is regulated as follows. Inhibited by UTP. Its function is as follows. Catalyzes the reversible phosphorylation of UMP to UDP. This is Uridylate kinase from Polaromonas sp. (strain JS666 / ATCC BAA-500).